We begin with the raw amino-acid sequence, 403 residues long: Vacuole membrane protein 1 homolog (403 aa).

Residues 7–33 (IVLSNEKDIQLRIQQLEERKEKRKNVK) adopt a coiled-coil conformation. Transmembrane regions (helical) follow at residues 65 to 85 (FLLF…YVPG), 102 to 122 (IWWV…LHTF), 150 to 170 (ANSF…WMIL), 175 to 195 (WAAL…YFVA), 240 to 260 (LIGN…NPLF), 263 to 283 (AGIT…ATFI), 294 to 314 (ACFV…SFIE), and 348 to 368 (VGLA…MSIV).

The protein belongs to the VMP1 family.

It is found in the membrane. Its subcellular location is the endoplasmic reticulum. The catalysed reaction is a 1,2-diacyl-sn-glycero-3-phospho-L-serine(in) = a 1,2-diacyl-sn-glycero-3-phospho-L-serine(out). It catalyses the reaction cholesterol(in) = cholesterol(out). It carries out the reaction a 1,2-diacyl-sn-glycero-3-phosphocholine(in) = a 1,2-diacyl-sn-glycero-3-phosphocholine(out). The enzyme catalyses a 1,2-diacyl-sn-glycero-3-phosphoethanolamine(in) = a 1,2-diacyl-sn-glycero-3-phosphoethanolamine(out). In terms of biological role, phospholipid scramblase involved in lipid homeostasis and membrane dynamics processes. Required for autophagosome formation: participates in early stages of autophagosome biogenesis at the endoplasmic reticulum (ER) membrane by reequilibrating the leaflets of the ER as lipids are extracted. In addition to autophagy, involved in other processes in which phospholipid scramblase activity is required. The sequence is that of Vacuole membrane protein 1 homolog from Dictyostelium discoideum (Social amoeba).